We begin with the raw amino-acid sequence, 648 residues long: Biosynthetic arginine decarboxylase (648 aa).

At lysine 109 the chain carries N6-(pyridoxal phosphate)lysine. 291–301 (IDVGGGLGIDF) is a substrate binding site.

It belongs to the Orn/Lys/Arg decarboxylase class-II family. SpeA subfamily. The cofactor is Mg(2+). Pyridoxal 5'-phosphate is required as a cofactor.

The catalysed reaction is L-arginine + H(+) = agmatine + CO2. It participates in amine and polyamine biosynthesis; agmatine biosynthesis; agmatine from L-arginine: step 1/1. In terms of biological role, catalyzes the biosynthesis of agmatine from arginine. The chain is Biosynthetic arginine decarboxylase from Prochlorococcus marinus (strain MIT 9301).